A 139-amino-acid chain; its full sequence is Deoxyuridine 5'-triphosphate nucleotidohydrolase (139 aa).

Substrate is bound by residues 58-60 (RSG), Asn71, 75-77 (LID), and Met85.

The protein belongs to the dUTPase family. Requires Mg(2+) as cofactor.

The catalysed reaction is dUTP + H2O = dUMP + diphosphate + H(+). It participates in pyrimidine metabolism; dUMP biosynthesis; dUMP from dCTP (dUTP route): step 2/2. This enzyme is involved in nucleotide metabolism: it produces dUMP, the immediate precursor of thymidine nucleotides and it decreases the intracellular concentration of dUTP so that uracil cannot be incorporated into DNA. The polypeptide is Deoxyuridine 5'-triphosphate nucleotidohydrolase (Gamma-proteobacterium EBAC31A08).